Here is a 409-residue protein sequence, read N- to C-terminus: Glucan endo-1,6-beta-glucosidase B (409 aa).

A signal peptide spans 1–16; sequence MKFILPLFTSLPVALA. Asparagine 35 is a glycosylation site (N-linked (GlcNAc...) asparagine). Glutamate 228 acts as the Proton donor in catalysis. Glutamate 330 (nucleophile) is an active-site residue.

This sequence belongs to the glycosyl hydrolase 5 (cellulase A) family.

It localises to the secreted. It catalyses the reaction Random hydrolysis of (1-&gt;6)-linkages in (1-&gt;6)-beta-D-glucans.. In terms of biological role, beta-glucanases participate in the metabolism of beta-glucan, the main structural component of the cell wall. Acts on lutean, pustulan and 1,6-oligo-beta-D-glucosides. In Emericella nidulans (strain FGSC A4 / ATCC 38163 / CBS 112.46 / NRRL 194 / M139) (Aspergillus nidulans), this protein is Glucan endo-1,6-beta-glucosidase B (exgB).